Consider the following 1074-residue polypeptide: MSITDLSPTLGILRSLYPHVQVLVDFADDIVFREGHKATLIEESDTSHFKSFVRGIFVCFHKELQQVPSCNQICTLPELLAFVLNSVKRKRKRNVLAHGYNFQSLAQEERDADQFKLQGDVTQSAAYVHGSDLWRKVSMRLGTDITRYLFESCSVFVAVPPSCLFQVCGIPIYDCFSLATASLGFSLQSRGCRERCLGVNSMKRRAFNVKRYLRKRKTETDQKDEARVCSGKRRRVMEEDKVSCETMQDGESGKTTLVQKQPGSKKRSEMEATLLPLEGGPSWRSGTFPPLPPSQSFMRTLGFLYGGRGMRSFLLNRKKKTAEGFRKIQGRDLIRIVFFEGVLYLNGLERKPKKLPRRFFNMVPLFSQLLRQHRRCPYSRLLQKTCPLVGIKDAGQAELSSFLPQHCGSHRVYLFVRECLLAVIPQELWGSEHNRLLYFARVRFFLRSGKFERLSVAELMWKIKVNNCDWLKISKTGRVPPSELSYRTQILGQFLAWLLDGFVVGLVRACFYATESMGQKNAIRFYRQEVWAKLQDLAFRSHISKGQMVELTPDQVAALPKSTIISRLRFIPKTDGMRPITRVIGADAKTRLYQSHVRDLLDMLRACVCSTPSLLGSTVWGMTDIHKVLSSIAPAQKEKPQPLYFVKMDVSGAYESLPHNKLIEVINQVLTPVLNEVFTIRRFAKIWADSHEGLKKAFIRQADFLEANMGSINMKQFLTSLQKKGKLHHSVLVEQIFSSDLEGKDALQFFTQILKGSVIQFGKKTYRQCQGVPQGSAVSSVLCCLCYGHMENVLFKDIINKKSCLMRLVDDFLLITPNLHDAQTFLKILLAGVPQYGLVVNPQKVVVNFEDYGSTDSCPGLRVLPLRCLFPWCGLLLDTHTLDIYKDYSSYADLSLRYSLTLGSCHSAGHQMKRKLMGILRLKCHALFLDLKTNSLEAIYKNIYKLLLLHALRFHVCAQSLPFGQSVAKNPAYFLLMIWDMVEYTNYLIRLSNNGLISGSTSQTGSVQYEAVELLFCLSFLLVLSKHRRLYKDLLLHLHKRKRRLEQCLGDLRLARVRQAANPRNPLDFLAIKT.

A disordered region spans residues 240 to 265 (DKVSCETMQDGESGKTTLVQKQPGSK). Polar residues predominate over residues 253–262 (GKTTLVQKQP). Positions 300–305 (TLGFLY) match the TFLY; involved in RNA binding motif. Interaction with RNA template regions lie at residues 355–360 (LPRRFF) and 461–486 (WKIKVNNCDWLKISKTGRVPPSELSY). One can recognise a Reverse transcriptase domain in the interval 552-877 (TPDQVAALPK…CLFPWCGLLL (326 aa)). Residues aspartate 649, aspartate 810, and aspartate 811 each contribute to the Mg(2+) site.

It belongs to the reverse transcriptase family. Telomerase subfamily. As to quaternary structure, catalytic subunit of the telomerase holoenzyme complex composed minimally of TERT and the telomerase RNA template component (TERC). As to expression, detected at highest levels in gill, ovary and testis, and at lower levels in brain, eye, heart, skin, spleen and stomach.

It localises to the nucleus. It is found in the chromosome. The protein resides in the telomere. The enzyme catalyses DNA(n) + a 2'-deoxyribonucleoside 5'-triphosphate = DNA(n+1) + diphosphate. Its function is as follows. Telomerase is a ribonucleoprotein enzyme essential for the replication of chromosome termini in most eukaryotes. It elongates telomeres. It is a reverse transcriptase that adds simple sequence repeats to chromosome ends by copying a template sequence within the RNA component of the enzyme. This chain is Telomerase reverse transcriptase, found in Takifugu rubripes (Japanese pufferfish).